A 110-amino-acid polypeptide reads, in one-letter code: MELLRLAILFAVTALAEIVGCYLPWLVLKQGKSLLLLVPAAMSLGLFAWLLTLHPSAAGRTYAAYGGMYIAVALGWLRFVDGIALTRWDLSGAAIALVGMAVIVMQPSTT.

The next 4 membrane-spanning stretches (helical) occupy residues 8-28 (ILFA…WLVL), 33-53 (SLLL…LLTL), 65-85 (YGGM…GIAL), and 88-108 (WDLS…MQPS).

Belongs to the UPF0060 family.

It localises to the cell inner membrane. The polypeptide is UPF0060 membrane protein Pnap_4944 (Polaromonas naphthalenivorans (strain CJ2)).